Here is a 514-residue protein sequence, read N- to C-terminus: MSLNAERSYKMKLRDVENAFKYRRIPYPKRSVELIALLAISCTFFLFMHTNKLNSRLKEMEVKLQPSEFSALGLTGNHISGHDAGKHDDINTLHGTYQYLKSTGQKVGYNVHDRRSSEEQLRTPTAHGHHHDHHSHHHHMHQQEKIDGHKHKASHDKQLAVPDNKHKEDEVHYEDDEDEVEENDDDLANDVGTTDSEGFNFKADLLNNTKYAEVDFVFFNRVPKVGSQSLMELMARLGKINGFTHARNKGSAHETIVMNKQRQNDLIADLLTRPKPHIYSQHIAYINFTRFHLPKPIYINLIRDPIDRIISWHYYIRAPWYYRDMQAKLGENAIPMPSEEFMNLDLDTCVRNHDPHCTFTQMQIKNPVGDHRRQTLFFCGMNQKLCMPFNSEAAMQKAKRTVETEYAVVGTWEDTNITLSVLEAYIPRYFRNAKVAYYLGKDRLSRVNRNNVTRIVSDETRLILRKNLTNEIEFYEFCKQRLYLQYAALSHGKRFGEDDYLLVPEQQNEYNEDY.

The Cytoplasmic segment spans residues 1–30 (MSLNAERSYKMKLRDVENAFKYRRIPYPKR). Residues 31 to 50 (SVELIALLAISCTFFLFMHT) form a helical; Signal-anchor for type II membrane protein membrane-spanning segment. Topologically, residues 51 to 514 (NKLNSRLKEM…EQQNEYNEDY (464 aa)) are lumenal. The span at 112-121 (HDRRSSEEQL) shows a compositional bias: basic and acidic residues. The tract at residues 112–185 (HDRRSSEEQL…DEDEVEENDD (74 aa)) is disordered. A compositionally biased stretch (basic residues) spans 127–140 (HGHHHDHHSHHHHM). Basic and acidic residues predominate over residues 155–170 (HDKQLAVPDNKHKEDE). Positions 171-185 (VHYEDDEDEVEENDD) are enriched in acidic residues. Residue Asn207 is glycosylated (N-linked (GlcNAc...) asparagine). His282 is a catalytic residue. 4 N-linked (GlcNAc...) asparagine glycosylation sites follow: Asn287, Asn416, Asn451, and Asn467.

The protein belongs to the sulfotransferase 3 family. Interacts with wbl/windbeutel; the interaction is direct and does not require pip to be folded. Ovary-specific. Specifically expressed in the ventral follicle cells of stage 9-10 egg chambers. In terms of tissue distribution, expressed in ovaries. Specifically expressed in the ventral follicle cells of stage 9-10 egg chambers.

The protein localises to the golgi apparatus membrane. Sulfotransferase involved in dorsoventral axis patterning in early embryos. Required for the ventral activation of ea/easter by the protease snk in the perivitelline space between the embryonic membrane and the eggshell; activation of ea requires both activation of the ndl-gd-snk protease cascade and sulfation of a vitelline membrane component by pip. Probably acts by mediating the sulfation of some glycoprotein or glycosaminoglycan stably deposited in the vitelline membrane, whose ventrally localized modification leads to spatially restricted activation of the protease cascade resulting in localized activation of the spz Toll receptor ligand by ea. Functionally, probably required redundantly with isoform H for dorsoventral axis patterning in embryos. Lacks 2-O-sulfotransferase activity towards completely desulfated N-sulfated (CDSNS) heparin, chondroitin, and chondroitin sulfate A, B (dermatan sulfate), and C. Sulfates several components of the eggshell vitelline membrane, including Vml, Vm26Aa, Vm32E and psd/palisade/Fcp26Aa. In terms of biological role, probably required redundantly with isoform A for dorsoventral axis patterning in embryos. Its function is as follows. Lacks 2-O-sulfotransferase activity towards CDSNS heparin, chondroitin, and chondroitin sulfate A, B (dermatan sulfate), and C. The protein is Uronyl 2-sulfotransferase homolog pip of Drosophila melanogaster (Fruit fly).